A 176-amino-acid chain; its full sequence is Jacalin-related lectin 19 (176 aa).

Residues 12–154 (TVFVGPWGGN…LDSIGFHLSR (143 aa)) enclose the Jacalin-type lectin domain.

The protein belongs to the jacalin lectin family.

The polypeptide is Jacalin-related lectin 19 (JAL19) (Arabidopsis thaliana (Mouse-ear cress)).